Reading from the N-terminus, the 362-residue chain is Atypical chemokine receptor 3 (362 aa).

Over 1–40 (MDLHLFDYAEPGNFSDISWPCNSSDCIVVDTVLCPNMPNK) the chain is Extracellular. Asn13, Asn22, and Asn39 each carry an N-linked (GlcNAc...) asparagine glycan. The chain crosses the membrane as a helical span at residues 41–61 (SVLLYTLSFIYIFIFVIGMIA). Over 62–81 (NSVVVWVNIQAKTTGYDTHC) the chain is Cytoplasmic. A helical membrane pass occupies residues 82 to 102 (YILNLAIADLWVVVTIPVWVV). Residues 103 to 118 (SLVQHNQWPMGELTCK) lie on the Extracellular side of the membrane. Cys117 and Cys196 are disulfide-bonded. Residues 119–139 (ITHLIFSINLFGSIFFLTCMS) form a helical membrane-spanning segment. Residues 140-162 (VDRYLSITYFASTSSRRKKVVRR) are Cytoplasmic-facing. Residues 163–183 (AVCVLVWLLAFCVSLPDTYYL) traverse the membrane as a helical segment. Over 184-213 (KTVTSASNNETYCRSFYPEHSVKEWLISME) the chain is Extracellular. Residues 214–234 (LVSVVLGFAIPFCVIAVFYCL) traverse the membrane as a helical segment. Residues 235-252 (LARAISASSDQEKQSSRK) lie on the Cytoplasmic side of the membrane. Residues 253-273 (IIFSYVVVFLVCWLPYHVVVL) traverse the membrane as a helical segment. Residues 274 to 296 (LDIFSILHYIPFTCQLENFLFTA) are Extracellular-facing. The chain crosses the membrane as a helical span at residues 297–319 (LHVTQCLSLVHCCVNPVLYSFIN). Topologically, residues 320-362 (RNYRYELMKAFIFKYSAKTGLTKLIDASRVSETEYSALEQNAK) are cytoplasmic. A C-terminal cytoplasmic tail region spans residues 324 to 362 (YELMKAFIFKYSAKTGLTKLIDASRVSETEYSALEQNAK). Phosphoserine occurs at positions 347, 350, and 355.

It belongs to the G-protein coupled receptor 1 family. Atypical chemokine receptor subfamily. Homodimer. Can form heterodimers with CXCR4; heterodimerization may regulate CXCR4 signaling activity. Interacts with ARRB1 and ARRB2. The Ser/Thr residues in the C-terminal cytoplasmic tail may be phosphorylated. In terms of processing, ubiquitinated at the Lys residues in its C-terminal cytoplasmic tail and is essential for correct trafficking from and to the cell membrane. Deubiquitinated by CXCL12-stimulation in a reversible manner.

Its subcellular location is the cell membrane. It localises to the early endosome. The protein resides in the recycling endosome. Its function is as follows. Atypical chemokine receptor that controls chemokine levels and localization via high-affinity chemokine binding that is uncoupled from classic ligand-driven signal transduction cascades, resulting instead in chemokine sequestration, degradation, or transcytosis. Also known as interceptor (internalizing receptor) or chemokine-scavenging receptor or chemokine decoy receptor. Acts as a receptor for chemokines CXCL11 and CXCL12/SDF1. Chemokine binding does not activate G-protein-mediated signal transduction but instead induces beta-arrestin recruitment, leading to ligand internalization and activation of MAPK signaling pathway. Required for regulation of CXCR4 protein levels in migrating interneurons, thereby adapting their chemokine responsiveness. In glioma cells, transduces signals via MEK/ERK pathway, mediating resistance to apoptosis. Promotes cell growth and survival. Not involved in cell migration, adhesion or proliferation of normal hematopoietic progenitors but activated by CXCL11 in malignant hemapoietic cells, leading to phosphorylation of ERK1/2 (MAPK3/MAPK1) and enhanced cell adhesion and migration. Plays a regulatory role in CXCR4-mediated activation of cell surface integrins by CXCL12. Required for heart valve development. Regulates axon guidance in the oculomotor system through the regulation of CXCL12 levels. This is Atypical chemokine receptor 3 (ACKR3) from Canis lupus familiaris (Dog).